Here is a 183-residue protein sequence, read N- to C-terminus: Casparian strip membrane protein 2 (183 aa).

At 1–23 the chain is on the cytoplasmic side; sequence MDSGEQGETSKAPLNKGVSRGVS. The chain crosses the membrane as a helical span at residues 24–44; the sequence is ILDLILRVIAVISTLASAIAM. At 45 to 71 the chain is on the extracellular side; that stretch reads GTTNETLPLFTPFIQFKARYSDLPALT. N-linked (GlcNAc...) asparagine glycosylation is present at Asn-48. The chain crosses the membrane as a helical span at residues 72 to 92; the sequence is FFVVANSIVSAYLILSLPLSI. Over 93–104 the chain is Cytoplasmic; sequence AHIIRSGAKYSR. A helical membrane pass occupies residues 105 to 125; it reads LVLIIFDAAMLALVTAASSAA. The Extracellular portion of the chain corresponds to 126-158; it reads TAIVYLAHKGNVRANWLAICQQLDSFCERTSGS. Residues 159-179 form a helical membrane-spanning segment; the sequence is LVGSFGAMVLLILLILLSAMA. The Cytoplasmic segment spans residues 180–183; it reads LARR.

It belongs to the Casparian strip membrane proteins (CASP) family. Homodimer and heterodimers.

Its subcellular location is the cell membrane. Regulates membrane-cell wall junctions and localized cell wall deposition. Required for establishment of the Casparian strip membrane domain (CSD) and the subsequent formation of Casparian strips, a cell wall modification of the root endodermis that determines an apoplastic barrier between the intraorganismal apoplasm and the extraorganismal apoplasm and prevents lateral diffusion. This chain is Casparian strip membrane protein 2, found in Triticum aestivum (Wheat).